We begin with the raw amino-acid sequence, 91 residues long: Acyl-CoA-binding domain-containing protein 1 (91 aa).

The ACB domain maps to Leu-3–Ala-88. Residues Lys-15, Tyr-30–Lys-34, Lys-56, and Tyr-75 each bind an acyl-CoA.

This sequence belongs to the ACBP family. Highly expressed in leaves. Expressed at low levels in roots and seeds.

The protein localises to the cytoplasm. The protein resides in the cytosol. Binds medium- and long-chain acyl-CoA esters with high affinity. Can interact in vitro with palmitoyl-CoA, oleoyl-CoA, linoleoyl-CoA and linolenoyl-CoA. Binds phosphatidic acid (PA) and phosphatidylcholine (PC) in vitro. May play a role in the biosynthesis of phospholipids. The protein is Acyl-CoA-binding domain-containing protein 1 of Oryza sativa subsp. japonica (Rice).